Reading from the N-terminus, the 171-residue chain is Shikimate kinase (171 aa).

ATP is bound at residue 14–19; that stretch reads GAGKST. S18 provides a ligand contact to Mg(2+). Residues D36, R60, and G82 each coordinate substrate. Residue R120 participates in ATP binding. Substrate is bound at residue R139. Q156 provides a ligand contact to ATP.

Belongs to the shikimate kinase family. In terms of assembly, monomer. Requires Mg(2+) as cofactor.

It localises to the cytoplasm. It catalyses the reaction shikimate + ATP = 3-phosphoshikimate + ADP + H(+). The protein operates within metabolic intermediate biosynthesis; chorismate biosynthesis; chorismate from D-erythrose 4-phosphate and phosphoenolpyruvate: step 5/7. Catalyzes the specific phosphorylation of the 3-hydroxyl group of shikimic acid using ATP as a cosubstrate. This Shewanella amazonensis (strain ATCC BAA-1098 / SB2B) protein is Shikimate kinase.